The following is a 113-amino-acid chain: Nitrogenase-stabilizing/protective protein NifW (113 aa).

This sequence belongs to the NifW family. Homotrimer; associates with NifD.

In terms of biological role, may protect the nitrogenase Fe-Mo protein from oxidative damage. In Polaromonas naphthalenivorans (strain CJ2), this protein is Nitrogenase-stabilizing/protective protein NifW.